Reading from the N-terminus, the 221-residue chain is uncharacterized protein (221 aa).

The signal sequence occupies residues 1–23; the sequence is MNKLIQLALFFTLMLTGCSNSST. The segment at 67–221 is disordered; it reads ELGKRKAKEE…QGYIDPEDAP (155 aa). The span at 68 to 150 shows a compositional bias: basic and acidic residues; that stretch reads LGKRKAKEEA…EQKANAEKKR (83 aa). A coiled-coil region spans residues 70–161; the sequence is KRKAKEEAEK…SQAQRQQTEA (92 aa). A compositionally biased stretch (polar residues) spans 152–161; the sequence is SQAQRQQTEA. Positions 162–174 are enriched in low complexity; it reads PSSNSQDPPSSSS. A compositionally biased stretch (polar residues) spans 175-184; it reads QTDKTIQQPA. The segment covering 195 to 205 has biased composition (basic and acidic residues); it reads YEERKKWHDDQ.

This is an uncharacterized protein from Bacillus subtilis (strain 168).